Here is a 638-residue protein sequence, read N- to C-terminus: DNA gyrase subunit B (638 aa).

Positions 422 to 536 (SELYIVEGDS…NGYVYIAQPP (115 aa)) constitute a Toprim domain. Residues Glu428, Asp501, and Asp503 each coordinate Mg(2+).

It belongs to the type II topoisomerase GyrB family. In terms of assembly, heterotetramer, composed of two GyrA and two GyrB chains. In the heterotetramer, GyrA contains the active site tyrosine that forms a transient covalent intermediate with DNA, while GyrB binds cofactors and catalyzes ATP hydrolysis. Requires Mg(2+) as cofactor. Mn(2+) is required as a cofactor. The cofactor is Ca(2+).

The protein localises to the cytoplasm. It catalyses the reaction ATP-dependent breakage, passage and rejoining of double-stranded DNA.. A type II topoisomerase that negatively supercoils closed circular double-stranded (ds) DNA in an ATP-dependent manner to modulate DNA topology and maintain chromosomes in an underwound state. Negative supercoiling favors strand separation, and DNA replication, transcription, recombination and repair, all of which involve strand separation. Also able to catalyze the interconversion of other topological isomers of dsDNA rings, including catenanes and knotted rings. Type II topoisomerases break and join 2 DNA strands simultaneously in an ATP-dependent manner. In Bacillus subtilis (strain 168), this protein is DNA gyrase subunit B.